Consider the following 143-residue polypeptide: Transcriptional regulator MraZ (143 aa).

SpoVT-AbrB domains lie at 5-47 and 76-119; these read EYHH…PMQG and ATEC…SRSR.

Belongs to the MraZ family. As to quaternary structure, forms oligomers.

It is found in the cytoplasm. The protein resides in the nucleoid. In Moorella thermoacetica (strain ATCC 39073 / JCM 9320), this protein is Transcriptional regulator MraZ.